Consider the following 614-residue polypeptide: uncharacterized protein (614 aa).

4 consecutive transmembrane segments (helical) span residues 41 to 61, 87 to 107, 157 to 177, and 178 to 198; these read GWIFLLAILTVGTGVMEAVLF, LIGMAALLLISIVWGFLASAV, DTVLTLANMFVYVLVYFITSG, and VVLVALDSWFLLPFITWIILF. One can recognise an ABC transmembrane type-1 domain in the interval 43–330; sequence IFLLAILTVG…IMWESARLFE (288 aa). The ABC transporter domain occupies 364-603; sequence IKFNDITFAY…NGLYAKLWNH (240 aa). 397–404 lines the ATP pocket; sequence GRSGAGKS.

This sequence belongs to the ABC transporter superfamily.

It localises to the cell membrane. This is an uncharacterized protein from Haemophilus influenzae (strain ATCC 51907 / DSM 11121 / KW20 / Rd).